Here is a 167-residue protein sequence, read N- to C-terminus: Transmembrane protein 229B (167 aa).

The Cytoplasmic portion of the chain corresponds to 1–14 (MASAEPLTALSRWY). Residues 15-35 (LYAIHGYFCEVMFTAAWEFVV) form a helical membrane-spanning segment. At 36–40 (NLNWK) the chain is on the extracellular side. The chain crosses the membrane as a helical span at residues 41 to 61 (FPGVTSVWALFIYGTSILIVE). Topologically, residues 62-73 (RMYLRLRGRCPL) are cytoplasmic. A helical membrane pass occupies residues 74 to 94 (LLRCLIYTLWTYLWEFTTGFI). The Extracellular portion of the chain corresponds to 95 to 109 (LRQFNACPWDYSQFD). Residues 110–130 (FDFMGLITLEYAVPWFCGALI) form a helical membrane-spanning segment. The Cytoplasmic portion of the chain corresponds to 131-167 (MEQFIIRNTLRLRFDKDAEPGEPSGALALANGHVKTD).

The protein belongs to the TMEM229 family.

The protein resides in the membrane. The chain is Transmembrane protein 229B (TMEM229B) from Homo sapiens (Human).